Consider the following 2167-residue polypeptide: Myosin-VIIa (2167 aa).

The Myosin motor domain maps to glutamine 63–aspartate 733. Residue glycine 156 to threonine 163 participates in ATP binding. Actin-binding regions lie at residues leucine 612 to glutamate 634 and glutamine 712 to leucine 726. IQ domains are found at residues leucine 736–arginine 758, leucine 759–arginine 788, leucine 805–histidine 827, and lysine 828–glutamine 857. The stretch at glutamine 886–aspartate 919 forms a coiled coil. A MyTH4 1 domain is found at tyrosine 1008–lysine 1245. Positions isoleucine 1250–serine 1560 constitute an FERM 1 domain. The region spanning lysine 1558–threonine 1627 is the SH3 domain. Phosphoserine is present on residues serine 1651 and serine 1654. Residues tyrosine 1701–glutamine 1849 enclose the MyTH4 2 domain. The FERM 2 domain maps to isoleucine 1855–methionine 2158. Threonine 2045 bears the Phosphothreonine mark.

The protein belongs to the TRAFAC class myosin-kinesin ATPase superfamily. Myosin family. In terms of assembly, homodimerizes in a two headed molecule through the formation of a coiled-coil rod. Homodimers motility is approximately 8-10 times slower than that of myosin V, and its step size is 30 nm, which is consistent with the presence of five IQ motifs in its neck region. Interacts with Cad99C (via the cytoplasmic domain). Interacts with zip and Sans. As to expression, expressed in the setae, micro- and macrochaetae on the head, thorax and wing.

It localises to the cytoplasm. It is found in the cell cortex. The protein resides in the cell projection. Its subcellular location is the microvillus. Myosins are actin-based motor molecules with ATPase activity. Unconventional myosins serve in intracellular movements: can function in cells as a single-molecule cargo transporter. A very slow and high-duty-ratio motor, may be suitable for tension maintenance of actin filaments. Their highly divergent tails are presumed to bind to membranous compartments, which would be moved relative to actin filaments. Plays a key role in the formation of cellular projections and other actin-based functions required for embryonic and larval viability. Necessary for auditory transduction: plays a role in Johnston's organ organization by functioning in scolopidial apical attachment and therefore to acoustic stimulus propagation from the antenna a2/a3 joint to transducing elements. Interaction with the myosin zip may be important for its function in scolopidial apical attachment. During oogenesis it has Cad99c-dependent and Cad99c-independent roles in regulating the shape and spacing of the follicle cell microvilli which secrete eggshell material such as the vitelline membrane. May be required for the normal expression of Cad99c in the follicle cell microvilli. In Drosophila melanogaster (Fruit fly), this protein is Myosin-VIIa.